The chain runs to 131 residues: Arsenate reductase 2 (131 aa).

Residues Cys10, Cys82, and Cys89 each act as nucleophile in the active site. Cystine bridges form between Cys10–Cys82 and Cys82–Cys89.

Belongs to the low molecular weight phosphotyrosine protein phosphatase family. Thioredoxin-coupled ArsC subfamily.

The protein localises to the cytoplasm. The enzyme catalyses arsenate + [thioredoxin]-dithiol + H(+) = arsenite + [thioredoxin]-disulfide + H2O. Its function is as follows. Catalyzes the reduction of arsenate [As(V)] to arsenite [As(III)]. The chain is Arsenate reductase 2 from Staphylococcus saprophyticus subsp. saprophyticus (strain ATCC 15305 / DSM 20229 / NCIMB 8711 / NCTC 7292 / S-41).